A 323-amino-acid polypeptide reads, in one-letter code: Malate dehydrogenase (323 aa).

Residue 11–17 (GAAGQIA) coordinates NAD(+). Residues R92 and R98 each coordinate substrate. NAD(+) contacts are provided by residues N105, Q112, and 129–131 (VGN). Residues N131 and R162 each coordinate substrate. H187 (proton acceptor) is an active-site residue.

The protein belongs to the LDH/MDH superfamily. MDH type 2 family.

The enzyme catalyses (S)-malate + NAD(+) = oxaloacetate + NADH + H(+). In terms of biological role, catalyzes the reversible oxidation of malate to oxaloacetate. This chain is Malate dehydrogenase, found in Corynebacterium efficiens (strain DSM 44549 / YS-314 / AJ 12310 / JCM 11189 / NBRC 100395).